The sequence spans 666 residues: tRNA 5-methylaminomethyl-2-thiouridine biosynthesis bifunctional protein MnmC (666 aa).

The interval 1 to 245 (MKQYAIQPAT…KREMLCGVME (245 aa)) is tRNA (mnm(5)s(2)U34)-methyltransferase. The tract at residues 270 to 666 (IGGGIASALL…RKLLKGKAVK (397 aa)) is FAD-dependent cmnm(5)s(2)U34 oxidoreductase.

The protein in the N-terminal section; belongs to the methyltransferase superfamily. tRNA (mnm(5)s(2)U34)-methyltransferase family. This sequence in the C-terminal section; belongs to the DAO family. FAD is required as a cofactor.

The protein resides in the cytoplasm. It carries out the reaction 5-aminomethyl-2-thiouridine(34) in tRNA + S-adenosyl-L-methionine = 5-methylaminomethyl-2-thiouridine(34) in tRNA + S-adenosyl-L-homocysteine + H(+). Functionally, catalyzes the last two steps in the biosynthesis of 5-methylaminomethyl-2-thiouridine (mnm(5)s(2)U) at the wobble position (U34) in tRNA. Catalyzes the FAD-dependent demodification of cmnm(5)s(2)U34 to nm(5)s(2)U34, followed by the transfer of a methyl group from S-adenosyl-L-methionine to nm(5)s(2)U34, to form mnm(5)s(2)U34. The protein is tRNA 5-methylaminomethyl-2-thiouridine biosynthesis bifunctional protein MnmC of Salmonella choleraesuis (strain SC-B67).